Reading from the N-terminus, the 99-residue chain is Nucleoid-associated protein UPA3_0088 (99 aa).

It belongs to the YbaB/EbfC family. As to quaternary structure, homodimer.

The protein localises to the cytoplasm. The protein resides in the nucleoid. Its function is as follows. Binds to DNA and alters its conformation. May be involved in regulation of gene expression, nucleoid organization and DNA protection. The sequence is that of Nucleoid-associated protein UPA3_0088 from Ureaplasma parvum serovar 3 (strain ATCC 27815 / 27 / NCTC 11736).